The primary structure comprises 449 residues: MAAQAAPELAKLDLNKNTGSVEANAVSAGGSEKEEAENEGDSEDDRDDEQAGGSAEVNAEKKKKKKRPKKKKKTAKVQSSPPRIPLTTLFPNNNFPEGEIVEYLNENSYRTTNEEKRHLDRMNNDFLTEYRQAAEIHRQVRQYAQKELIKPGATLTDIAEGIEDGVRHLTGHMGLEEGDSLVAGMGFPTGLNINHCAAHYSPNAGNKVVLQHGDVMKVDFGVHINGRIVDSAFTVAFDPVFDPLLTAVKEATNTGIKEAGIDVRMSDIGAAIQETMESYELELNGTSYPIKAIRNLNGHTIGQYEIHGGVNGKSVPIVKGGDQTKMEEGETYAIETFGSTGKGYVRDDMETSHYAKVPNAPSVPLRLSSAKNLYSLINKNFGTLPFCRRYLDRLGQEKYLLGLNNLVSSGLVDAYPPLCDVKGSYTAQFEHTILLRPNVKEVISRGDDY.

The segment at Met-1 to Pro-91 is disordered. Residues Glu-34–Gln-50 show a composition bias toward acidic residues. Positions Lys-61–Ala-75 are enriched in basic residues. His-199 contacts substrate. Positions 219, 230, and 299 each coordinate a divalent metal cation. Substrate is bound at residue His-307. Positions 335 and 430 each coordinate a divalent metal cation.

Belongs to the peptidase M24A family. Methionine aminopeptidase eukaryotic type 2 subfamily. Co(2+) is required as a cofactor. It depends on Zn(2+) as a cofactor. The cofactor is Mn(2+). Requires Fe(2+) as cofactor.

Its subcellular location is the cytoplasm. It carries out the reaction Release of N-terminal amino acids, preferentially methionine, from peptides and arylamides.. Its function is as follows. Cotranslationally removes the N-terminal methionine from nascent proteins. The N-terminal methionine is often cleaved when the second residue in the primary sequence is small and uncharged (Met-Ala-, Cys, Gly, Pro, Ser, Thr, or Val). In Trichophyton verrucosum (strain HKI 0517), this protein is Methionine aminopeptidase 2.